We begin with the raw amino-acid sequence, 398 residues long: Succinate--CoA ligase [ADP-forming] subunit beta (398 aa).

The region spanning 9 to 253 (KELLKSYGVA…EAEEDPKELE (245 aa)) is the ATP-grasp domain. Residues Lys-46, 53–55 (GRG), Glu-108, Cys-111, and Glu-116 contribute to the ATP site. 2 residues coordinate Mg(2+): Asn-208 and Asp-222. Residues Asn-273 and 330 to 332 (GIM) contribute to the substrate site.

This sequence belongs to the succinate/malate CoA ligase beta subunit family. Heterotetramer of two alpha and two beta subunits. It depends on Mg(2+) as a cofactor.

The enzyme catalyses succinate + ATP + CoA = succinyl-CoA + ADP + phosphate. It carries out the reaction GTP + succinate + CoA = succinyl-CoA + GDP + phosphate. Its pathway is carbohydrate metabolism; tricarboxylic acid cycle; succinate from succinyl-CoA (ligase route): step 1/1. Succinyl-CoA synthetase functions in the citric acid cycle (TCA), coupling the hydrolysis of succinyl-CoA to the synthesis of either ATP or GTP and thus represents the only step of substrate-level phosphorylation in the TCA. The beta subunit provides nucleotide specificity of the enzyme and binds the substrate succinate, while the binding sites for coenzyme A and phosphate are found in the alpha subunit. This is Succinate--CoA ligase [ADP-forming] subunit beta from Acidiphilium cryptum (strain JF-5).